We begin with the raw amino-acid sequence, 402 residues long: Na(+)/H(+) antiporter NhaA 2 (402 aa).

11 consecutive transmembrane segments (helical) span residues 18–38 (AGGIVLMFAAVLALIFANTAL), 63–83 (ALLWINDGLMAVFFFLVGLEV), 99–119 (SLPLIAAFGGIVLPALVFYGI), 129–149 (GWAIPAATDIAFALGILALLG), 158–178 (ALLLAIAVIDDIAAIAIIAIF), 182–202 (GVELAMLGAAAITLLILSAFG), 210–230 (IPYIVLGIVLWYFVLKSGVHA), 258–278 (ALHSWVAFLVVPIFALANAGV), 296–316 (IALGLIVGKQVGIFGFAWLAV), 329–349 (WLQVWGLSLVAGIGFTMSLFI), and 365–385 (IGVLSGSLIAALVGIAILVLG).

It belongs to the NhaA Na(+)/H(+) (TC 2.A.33) antiporter family.

It localises to the cell inner membrane. The catalysed reaction is Na(+)(in) + 2 H(+)(out) = Na(+)(out) + 2 H(+)(in). In terms of biological role, na(+)/H(+) antiporter that extrudes sodium in exchange for external protons. The protein is Na(+)/H(+) antiporter NhaA 2 of Erythrobacter litoralis (strain HTCC2594).